A 238-amino-acid polypeptide reads, in one-letter code: Deoxyribose-phosphate aldolase (238 aa).

Aspartate 102 (proton donor/acceptor) is an active-site residue. Lysine 164 functions as the Schiff-base intermediate with acetaldehyde in the catalytic mechanism. Lysine 193 acts as the Proton donor/acceptor in catalysis.

This sequence belongs to the DeoC/FbaB aldolase family. DeoC type 1 subfamily.

Its subcellular location is the cytoplasm. The enzyme catalyses 2-deoxy-D-ribose 5-phosphate = D-glyceraldehyde 3-phosphate + acetaldehyde. Its pathway is carbohydrate degradation; 2-deoxy-D-ribose 1-phosphate degradation; D-glyceraldehyde 3-phosphate and acetaldehyde from 2-deoxy-alpha-D-ribose 1-phosphate: step 2/2. Catalyzes a reversible aldol reaction between acetaldehyde and D-glyceraldehyde 3-phosphate to generate 2-deoxy-D-ribose 5-phosphate. This Rhodospirillum rubrum (strain ATCC 11170 / ATH 1.1.1 / DSM 467 / LMG 4362 / NCIMB 8255 / S1) protein is Deoxyribose-phosphate aldolase.